We begin with the raw amino-acid sequence, 348 residues long: Phosphoribosylformylglycinamidine cyclo-ligase (348 aa).

This sequence belongs to the AIR synthase family.

The protein resides in the cytoplasm. It carries out the reaction 2-formamido-N(1)-(5-O-phospho-beta-D-ribosyl)acetamidine + ATP = 5-amino-1-(5-phospho-beta-D-ribosyl)imidazole + ADP + phosphate + H(+). Its pathway is purine metabolism; IMP biosynthesis via de novo pathway; 5-amino-1-(5-phospho-D-ribosyl)imidazole from N(2)-formyl-N(1)-(5-phospho-D-ribosyl)glycinamide: step 2/2. The chain is Phosphoribosylformylglycinamidine cyclo-ligase from Aromatoleum aromaticum (strain DSM 19018 / LMG 30748 / EbN1) (Azoarcus sp. (strain EbN1)).